We begin with the raw amino-acid sequence, 602 residues long: T-box transcription factor TBX15 (602 aa).

Positions 46–84 (ALSPAGPLGDTEDAAAHGLEPHPDSEQSTGSDSEVLTER) are disordered. A compositionally biased stretch (polar residues) spans 71–84 (EQSTGSDSEVLTER). Positions 122–304 (LWKRFHDIGT…RNPFAKGFRD (183 aa)) form a DNA-binding region, T-box. A Phosphothreonine modification is found at Thr330. 2 disordered regions span residues 338–369 (QKQQ…LSPS) and 425–447 (QSGT…PSLI). The segment covering 346–369 (GTSPTTSSTGTPSPSASSHLLSPS) has biased composition (low complexity). Residues 425–446 (QSGTTSATQPSETFMPQRTPSL) show a composition bias toward polar residues.

Can form a heterodimer with TBX18.

Its subcellular location is the nucleus. Functionally, probable transcriptional regulator involved in the development of the skeleton of the limb, vertebral column and head. Acts by controlling the number of mesenchymal precursor cells and chondrocytes. The sequence is that of T-box transcription factor TBX15 (TBX15) from Homo sapiens (Human).